Consider the following 122-residue polypeptide: MSPKESIELQEFQSLLQDEAYEELINKKTYEAIKYRSNDGILPIIITLFIFSFVISRMIIFFISLFNKNTYCELPAVADAIINSIALVCIIVILYFSSRKLNVEIRRGEVEDYRANLERNQR.

Helical transmembrane passes span 43 to 63 and 76 to 96; these read PIII…IFFI and AVAD…ILYF.

The protein resides in the membrane. This is an uncharacterized protein from Schizosaccharomyces pombe (strain 972 / ATCC 24843) (Fission yeast).